Here is a 212-residue protein sequence, read N- to C-terminus: ATP phosphoribosyltransferase (212 aa).

The protein belongs to the ATP phosphoribosyltransferase family. Short subfamily. Heteromultimer composed of HisG and HisZ subunits.

It is found in the cytoplasm. It catalyses the reaction 1-(5-phospho-beta-D-ribosyl)-ATP + diphosphate = 5-phospho-alpha-D-ribose 1-diphosphate + ATP. The protein operates within amino-acid biosynthesis; L-histidine biosynthesis; L-histidine from 5-phospho-alpha-D-ribose 1-diphosphate: step 1/9. Its function is as follows. Catalyzes the condensation of ATP and 5-phosphoribose 1-diphosphate to form N'-(5'-phosphoribosyl)-ATP (PR-ATP). Has a crucial role in the pathway because the rate of histidine biosynthesis seems to be controlled primarily by regulation of HisG enzymatic activity. The protein is ATP phosphoribosyltransferase of Geobacter metallireducens (strain ATCC 53774 / DSM 7210 / GS-15).